Reading from the N-terminus, the 37-residue chain is uncharacterized protein (37 aa).

A helical membrane pass occupies residues 13-33 (TFLTIIVLLMIVFGIAIVALL).

The protein resides in the host membrane. This is an uncharacterized protein from Acidianus convivator (ABV).